Reading from the N-terminus, the 101-residue chain is Helix-loop-helix protein 17 (101 aa).

Positions 14–27 (GVRLSINLRERCRM) are basic motif. One can recognise a bHLH domain in the interval 14-68 (GVRLSINLRERCRMHDLNEALDDLRAVIPYAHGGSVRKLSKIATLLLAKNHIIMQ). The segment at 28–68 (HDLNEALDDLRAVIPYAHGGSVRKLSKIATLLLAKNHIIMQ) is helix-loop-helix motif.

In terms of tissue distribution, expressed in neuronal tissues of the head, including sheath cells of the cephalic sensilla (CEPsh) glia.

The protein resides in the nucleus. Its function is as follows. Probable transcription factor that regulates the expression of dopamine receptors dop-1, dop-2 and dop-3 and thus dopamine-dependent behaviors. May act redundantly with hlh-31 and hlh-32 to regulate ventral CEPsh glia functions. May play a role in chemotactic responses in larvae. This Caenorhabditis elegans protein is Helix-loop-helix protein 17.